The sequence spans 602 residues: Probable translation initiation factor IF-2 (602 aa).

One can recognise a tr-type G domain in the interval 18-233; the sequence is LRTPIVCVMG…LVGLAQRFLK (216 aa). The segment at 27–34 is G1; the sequence is GHVDHGKT. GTP is bound at residue 27-34; it reads GHVDHGKT. The tract at residues 52 to 56 is G2; that stretch reads AITQH. Positions 88–91 are G3; it reads DTPG. GTP is bound by residues 88–92 and 142–145; these read DTPGH and NKID. Residues 142-145 are G4; sequence NKID. The interval 210 to 212 is G5; it reads SAI.

This sequence belongs to the TRAFAC class translation factor GTPase superfamily. Classic translation factor GTPase family. IF-2 subfamily.

Its function is as follows. Function in general translation initiation by promoting the binding of the formylmethionine-tRNA to ribosomes. Seems to function along with eIF-2. In Methanothrix thermoacetophila (strain DSM 6194 / JCM 14653 / NBRC 101360 / PT) (Methanosaeta thermophila), this protein is Probable translation initiation factor IF-2.